The chain runs to 337 residues: Ferredoxin--NADP reductase (337 aa).

FAD is bound by residues Glu42, Gln50, Tyr55, Val97, Phe130, Asp292, and Thr333.

The protein belongs to the ferredoxin--NADP reductase type 2 family. Homodimer. The cofactor is FAD.

It catalyses the reaction 2 reduced [2Fe-2S]-[ferredoxin] + NADP(+) + H(+) = 2 oxidized [2Fe-2S]-[ferredoxin] + NADPH. This Streptococcus mutans serotype c (strain ATCC 700610 / UA159) protein is Ferredoxin--NADP reductase.